Consider the following 220-residue polypeptide: Octanoyltransferase (220 aa).

Residues 27–208 enclose the BPL/LPL catalytic domain; that stretch reads PGTADEIWLC…QLARAHGQAV (182 aa). Substrate contacts are provided by residues 66-73, 139-141, and 152-154; these read RGGQVTYH, ALG, and GLA. Cys170 (acyl-thioester intermediate) is an active-site residue.

It belongs to the LipB family.

The protein localises to the cytoplasm. The catalysed reaction is octanoyl-[ACP] + L-lysyl-[protein] = N(6)-octanoyl-L-lysyl-[protein] + holo-[ACP] + H(+). It participates in protein modification; protein lipoylation via endogenous pathway; protein N(6)-(lipoyl)lysine from octanoyl-[acyl-carrier-protein]: step 1/2. Its function is as follows. Catalyzes the transfer of endogenously produced octanoic acid from octanoyl-acyl-carrier-protein onto the lipoyl domains of lipoate-dependent enzymes. Lipoyl-ACP can also act as a substrate although octanoyl-ACP is likely to be the physiological substrate. In Bordetella bronchiseptica (strain ATCC BAA-588 / NCTC 13252 / RB50) (Alcaligenes bronchisepticus), this protein is Octanoyltransferase.